The chain runs to 84 residues: Sulfur carrier protein TusA (84 aa).

The Cysteine persulfide intermediate role is filled by Cys21.

It belongs to the sulfur carrier protein TusA family.

It is found in the cytoplasm. Its function is as follows. Sulfur carrier protein which probably makes part of a sulfur-relay system. In Pseudomonas syringae pv. syringae (strain B728a), this protein is Sulfur carrier protein TusA.